A 263-amino-acid polypeptide reads, in one-letter code: Putative aliphatic sulfonates transport permease protein SsuC (263 aa).

Topologically, residues 1-13 (MATPVKKWLLRVA) are cytoplasmic. Residues 14–34 (PWFLPVGIVAVWQLASSVGWL) form a helical membrane-spanning segment. Residues 35 to 43 (STRILPSPE) are Periplasmic-facing. A helical transmembrane segment spans residues 44-64 (GVVTAFWTLSASGELWQHLAI). Positions 58 to 242 (LWQHLAISSW…LLGKLADVSA (185 aa)) constitute an ABC transmembrane type-1 domain. Residues 65-68 (SSWR) lie on the Cytoplasmic side of the membrane. A helical membrane pass occupies residues 69-89 (ALIGFSIGGSLGLILGLISGL). The Periplasmic portion of the chain corresponds to 90-102 (SRWGERLLDTSIQ). A helical membrane pass occupies residues 103–122 (MLRNVPHLALIPLVILWFGI). The Cytoplasmic portion of the chain corresponds to 123-125 (DES). Residues 126-148 (AKIFLVALGTLFPIYINTWHGIR) traverse the membrane as a helical segment. Residues 149-164 (NIDRGLVEMARSYGLS) lie on the Periplasmic side of the membrane. Residues 165 to 185 (GIPLFIHVILPGALPSIMVGV) traverse the membrane as a helical segment. At 186–187 (RF) the chain is on the cytoplasmic side. The chain crosses the membrane as a helical span at residues 188 to 208 (ALGLMWLTLIVAETISANSGI). The Periplasmic portion of the chain corresponds to 209-217 (GYLAMNARE). Residues 218–238 (FLQTDVVVVAIILYALLGKLA) form a helical membrane-spanning segment. At 239–263 (DVSAQLLERLWLRWNPAYHLKEATV) the chain is on the cytoplasmic side.

It belongs to the binding-protein-dependent transport system permease family. CysTW subfamily.

It localises to the cell inner membrane. In terms of biological role, part of a binding-protein-dependent transport system for aliphatic sulfonates. Probably responsible for the translocation of the substrate across the membrane. The chain is Putative aliphatic sulfonates transport permease protein SsuC (ssuC) from Escherichia coli (strain K12).